A 212-amino-acid polypeptide reads, in one-letter code: Leucine efflux protein (212 aa).

6 helical membrane-spanning segments follow: residues 12-32 (TYLV…LFVL), 49-69 (GVFI…ATLI), 71-91 (TTPI…LYLG), 122-142 (ILSL…VQFI), 153-173 (FFIL…FLII), and 188-208 (LAKV…ARLA).

It belongs to the Rht family.

It localises to the cell inner membrane. It catalyses the reaction L-leucine(in) + H(+)(out) = L-leucine(out) + H(+)(in). With respect to regulation, leucine export is inhibited by the proton ionophore carbonyl cyanide m-chlorophenylhydrazone (CCCP). Functionally, exporter of leucine. Can also transport its natural analog L-alpha-amino-n-butyric acid and some other structurally unrelated amino acids. Leucine excretion is probably driven by proton motive force. The chain is Leucine efflux protein from Escherichia coli (strain K12).